The chain runs to 169 residues: Crossover junction endodeoxyribonuclease RuvC (169 aa).

Active-site residues include Asp-7, Glu-67, and Asp-139. The Mg(2+) site is built by Asp-7, Glu-67, and Asp-139.

It belongs to the RuvC family. Homodimer which binds Holliday junction (HJ) DNA. The HJ becomes 2-fold symmetrical on binding to RuvC with unstacked arms; it has a different conformation from HJ DNA in complex with RuvA. In the full resolvosome a probable DNA-RuvA(4)-RuvB(12)-RuvC(2) complex forms which resolves the HJ. Mg(2+) is required as a cofactor.

It localises to the cytoplasm. It carries out the reaction Endonucleolytic cleavage at a junction such as a reciprocal single-stranded crossover between two homologous DNA duplexes (Holliday junction).. Its function is as follows. The RuvA-RuvB-RuvC complex processes Holliday junction (HJ) DNA during genetic recombination and DNA repair. Endonuclease that resolves HJ intermediates. Cleaves cruciform DNA by making single-stranded nicks across the HJ at symmetrical positions within the homologous arms, yielding a 5'-phosphate and a 3'-hydroxyl group; requires a central core of homology in the junction. The consensus cleavage sequence is 5'-(A/T)TT(C/G)-3'. Cleavage occurs on the 3'-side of the TT dinucleotide at the point of strand exchange. HJ branch migration catalyzed by RuvA-RuvB allows RuvC to scan DNA until it finds its consensus sequence, where it cleaves and resolves the cruciform DNA. The protein is Crossover junction endodeoxyribonuclease RuvC of Rhodospirillum rubrum (strain ATCC 11170 / ATH 1.1.1 / DSM 467 / LMG 4362 / NCIMB 8255 / S1).